Reading from the N-terminus, the 422-residue chain is Mitochondrial distribution and morphology protein 12 (422 aa).

Residues 1–386 (MSFDINWNQL…WPSWICIDMN (386 aa)) enclose the SMP-LTD domain. Disordered regions lie at residues 74–134 (GATN…HDLG) and 387–422 (DDGD…THEV). Acidic residues-rich tracts occupy residues 109–130 (FDDD…EYDD) and 387–401 (DDGD…EDSN). Residues 405 to 422 (GDGKDNDGKHGDGPTHEV) are compositionally biased toward basic and acidic residues.

Belongs to the MDM12 family. As to quaternary structure, component of the ER-mitochondria encounter structure (ERMES) or MDM complex, composed of MMM1, MDM10, MDM12 and MDM34. An MMM1 homodimer associates with one molecule of MDM12 on each side in a pairwise head-to-tail manner, and the SMP-LTD domains of MMM1 and MDM12 generate a continuous hydrophobic tunnel for phospholipid trafficking.

It is found in the mitochondrion outer membrane. The protein localises to the endoplasmic reticulum membrane. Its function is as follows. Component of the ERMES/MDM complex, which serves as a molecular tether to connect the endoplasmic reticulum (ER) and mitochondria. Components of this complex are involved in the control of mitochondrial shape and protein biogenesis, and function in nonvesicular lipid trafficking between the ER and mitochondria. MDM12 is required for the interaction of the ER-resident membrane protein MMM1 and the outer mitochondrial membrane-resident beta-barrel protein MDM10. The MDM12-MMM1 subcomplex functions in the major beta-barrel assembly pathway that is responsible for biogenesis of all mitochondrial outer membrane beta-barrel proteins, and acts in a late step after the SAM complex. The MDM10-MDM12-MMM1 subcomplex further acts in the TOM40-specific pathway after the action of the MDM12-MMM1 complex. Essential for establishing and maintaining the structure of mitochondria and maintenance of mtDNA nucleoids. In Candida dubliniensis (strain CD36 / ATCC MYA-646 / CBS 7987 / NCPF 3949 / NRRL Y-17841) (Yeast), this protein is Mitochondrial distribution and morphology protein 12.